Consider the following 190-residue polypeptide: dCTP deaminase, dUMP-forming (190 aa).

Residues 101–106 (KSSLGR), aspartate 119, 127–129 (TLE), glutamine 148, tyrosine 162, and glutamine 174 contribute to the dCTP site. Glutamate 129 (proton donor/acceptor) is an active-site residue. The disordered stretch occupies residues 163 to 190 (GSTRVGSKYQGQRGPTPSRSYQNFITST). A compositionally biased stretch (polar residues) spans 171-190 (YQGQRGPTPSRSYQNFITST).

It belongs to the dCTP deaminase family. As to quaternary structure, homotrimer.

The enzyme catalyses dCTP + 2 H2O = dUMP + NH4(+) + diphosphate. Its pathway is pyrimidine metabolism; dUMP biosynthesis; dUMP from dCTP: step 1/1. Functionally, bifunctional enzyme that catalyzes both the deamination of dCTP to dUTP and the hydrolysis of dUTP to dUMP without releasing the toxic dUTP intermediate. The chain is dCTP deaminase, dUMP-forming from Mycobacterium avium (strain 104).